A 183-amino-acid polypeptide reads, in one-letter code: Inosine/xanthosine triphosphatase (183 aa).

Mg(2+) is bound at residue Asp75. 75–76 (DG) provides a ligand contact to substrate.

This sequence belongs to the YjjX NTPase family. In terms of assembly, homodimer. Mg(2+) is required as a cofactor. Mn(2+) serves as cofactor.

It catalyses the reaction XTP + H2O = XDP + phosphate + H(+). It carries out the reaction ITP + H2O = IDP + phosphate + H(+). Phosphatase that hydrolyzes non-canonical purine nucleotides such as XTP and ITP to their respective diphosphate derivatives. Probably excludes non-canonical purines from DNA/RNA precursor pool, thus preventing their incorporation into DNA/RNA and avoiding chromosomal lesions. This is Inosine/xanthosine triphosphatase from Vibrio vulnificus (strain CMCP6).